We begin with the raw amino-acid sequence, 208 residues long: Octanoyltransferase (208 aa).

The BPL/LPL catalytic domain occupies 31 to 208 (GSEREMVWLL…LKKEFYKVFA (178 aa)). Substrate-binding positions include 70–77 (RGGKYSYH), 142–144 (AFG), and 155–157 (GVA). The Acyl-thioester intermediate role is filled by cysteine 173.

Belongs to the LipB family.

The protein resides in the cytoplasm. The enzyme catalyses octanoyl-[ACP] + L-lysyl-[protein] = N(6)-octanoyl-L-lysyl-[protein] + holo-[ACP] + H(+). Its pathway is protein modification; protein lipoylation via endogenous pathway; protein N(6)-(lipoyl)lysine from octanoyl-[acyl-carrier-protein]: step 1/2. Catalyzes the transfer of endogenously produced octanoic acid from octanoyl-acyl-carrier-protein onto the lipoyl domains of lipoate-dependent enzymes. Lipoyl-ACP can also act as a substrate although octanoyl-ACP is likely to be the physiological substrate. The polypeptide is Octanoyltransferase (Anaplasma phagocytophilum (strain HZ)).